The primary structure comprises 306 residues: Elongation factor Ts (306 aa).

Positions 80 to 83 (TDFV) are involved in Mg(2+) ion dislocation from EF-Tu.

Belongs to the EF-Ts family.

The protein resides in the cytoplasm. Associates with the EF-Tu.GDP complex and induces the exchange of GDP to GTP. It remains bound to the aminoacyl-tRNA.EF-Tu.GTP complex up to the GTP hydrolysis stage on the ribosome. The chain is Elongation factor Ts from Methylorubrum extorquens (strain CM4 / NCIMB 13688) (Methylobacterium extorquens).